The following is a 308-amino-acid chain: tRNA dimethylallyltransferase (308 aa).

Residue 9 to 16 coordinates ATP; it reads GPTAVGKT. 11–16 lines the substrate pocket; it reads TAVGKT. The interval 34 to 37 is interaction with substrate tRNA; that stretch reads DSMQ.

This sequence belongs to the IPP transferase family. Monomer. The cofactor is Mg(2+).

It carries out the reaction adenosine(37) in tRNA + dimethylallyl diphosphate = N(6)-dimethylallyladenosine(37) in tRNA + diphosphate. Catalyzes the transfer of a dimethylallyl group onto the adenine at position 37 in tRNAs that read codons beginning with uridine, leading to the formation of N6-(dimethylallyl)adenosine (i(6)A). This chain is tRNA dimethylallyltransferase, found in Lactobacillus delbrueckii subsp. bulgaricus (strain ATCC BAA-365 / Lb-18).